Reading from the N-terminus, the 566-residue chain is Peroxisomal leader peptide-processing protease (566 aa).

The segment at 319-531 (ALAALLPPEV…LQPALQQYSQ (213 aa)) is serine protease. Catalysis depends on charge relay system residues H372, D408, and S481.

It belongs to the peptidase S1B family. Homodimer. Forms a heterodimer with the C-terminal cleavage product (45 kDa form). Forms a heterodimer with the N-terminal cleavage product (15 kDa form). Interacts with PEX5. Interacts with LONP2. Post-translationally, self-cleavage gives rise to an N-terminal 15-kDa fragment and C-terminal 45-kDa fragment upon import into the peroxisomes. The full-lengh TYSND1 is the active the proteolytic processing of PTS1- and PTS2-proteins and in self-cleavage, and intermolecular self-cleavage of TYSND1 down-regulates its protease activity.

The protein resides in the peroxisome. In terms of biological role, peroxisomal protease that mediates both the removal of the leader peptide from proteins containing a PTS2 target sequence and processes several PTS1-containing proteins. Catalyzes the processing of PTS1-proteins involved in the peroxisomal beta-oxidation of fatty acids. The chain is Peroxisomal leader peptide-processing protease (TYSND1) from Homo sapiens (Human).